The following is an 887-amino-acid chain: 3-hydroxy-3-methylglutaryl-coenzyme A reductase (887 aa).

Topologically, residues 1–9 (MLSRLFRMH) are cytoplasmic. A helical membrane pass occupies residues 10-39 (GLFVASHPWEVIVGTVTLTICMMSMNMFTG). Residues 40–56 (NNKICGWNYECPKFEED) lie on the Lumenal side of the membrane. A helical membrane pass occupies residues 57–78 (VLSSDIIILTITRCIAILYIYF). In terms of domain architecture, SSD spans 61 to 218 (DIIILTITRC…MTFFPACVSL (158 aa)). The INSIG-binding motif motif lies at 75–78 (YIYF). Topologically, residues 79-89 (QFQNLRQLGSK) are cytoplasmic. Lysine 89 participates in a covalent cross-link: Glycyl lysine isopeptide (Lys-Gly) (interchain with G-Cter in ubiquitin). A helical membrane pass occupies residues 90-114 (YILGIAGLFTIFSSFVFSTVVIHFL). Residues 115–123 (DKELTGLNE) are Lumenal-facing. The chain crosses the membrane as a helical span at residues 124–149 (ALPFFLLLIDLSRASALAKFALSSNS). Residues 150–159 (QDEVRENIAR) are Cytoplasmic-facing. Residues 160–187 (GMAILGPTFTLDALVECLVIGVGTMSGV) traverse the membrane as a helical segment. The Lumenal segment spans residues 188–191 (RQLE). A helical membrane pass occupies residues 192-220 (IMCCFGCMSVLANYFVFMTFFPACVSLVL). Residues 221–248 (ELSRESREGRPIWQLSHFARVLEEEENK) lie on the Cytoplasmic side of the membrane. A Glycyl lysine isopeptide (Lys-Gly) (interchain with G-Cter in ubiquitin) cross-link involves residue lysine 248. The helical transmembrane segment at 249–275 (PNPVTQRVKMIMSLGLVLVHAHSRWIA) threads the bilayer. The Lumenal segment spans residues 276-314 (DPSPQNSTTEHSKVSLGLDEDVSKRIEPSVSLWQFYLSK). N-linked (GlcNAc...) asparagine glycosylation occurs at asparagine 281. The helical transmembrane segment at 315–339 (MISMDIEQVVTLSLAFLLAVKYIFF) threads the bilayer. The Cytoplasmic portion of the chain corresponds to 340-887 (EQAETESTLS…LQGTCTKKAA (548 aa)). Active-site charge relay system residues include glutamate 558, lysine 690, and aspartate 766. The Proton donor role is filled by histidine 865. Serine 871 bears the Phosphoserine; by AMPK mark.

Belongs to the HMG-CoA reductase family. In terms of assembly, homotetramer. Homodimer. Interacts (via its SSD) with INSIG1; the interaction, accelerated by sterols, leads to the recruitment of HMGCR to AMFR/gp78 for its ubiquitination by the sterol-mediated ERAD pathway. Interacts with UBIAD1. In terms of processing, undergoes sterol-mediated ubiquitination and ER-associated degradation (ERAD). Accumulation of sterols in the endoplasmic reticulum (ER) membrane, triggers binding of the reductase to the ER membrane protein INSIG1 or INSIG2. The INSIG1 binding leads to the recruitment of the ubiquitin ligase, AMFR/gp78, RNF139 or RNF145, initiating ubiquitination of the reductase. The ubiquitinated reductase is then extracted from the ER membrane and delivered to cytosolic 26S proteosomes by a mechanism probably mediated by the ATPase Valosin-containing protein VCP/p97. The INSIG2-binding leads to the recruitment of the ubiquitin ligase RNF139, initiating ubiquitination of the reductase. Lys-248 is the main site of ubiquitination. Ubiquitination is enhanced by the presence of a geranylgeranylated protein. Post-translationally, N-glycosylated. Deglycosylated by NGLY1 on release from the endoplasmic reticulum (ER) in a sterol-mediated manner. Phosphorylated. Phosphorylation at Ser-871 reduces the catalytic activity.

The protein localises to the endoplasmic reticulum membrane. It localises to the peroxisome membrane. It carries out the reaction (R)-mevalonate + 2 NADP(+) + CoA = (3S)-3-hydroxy-3-methylglutaryl-CoA + 2 NADPH + 2 H(+). It functions in the pathway metabolic intermediate biosynthesis; (R)-mevalonate biosynthesis; (R)-mevalonate from acetyl-CoA: step 3/3. Regulated by a negative feedback mechanism through sterols and non-sterol metabolites derived from mevalonate. Phosphorylation at Ser-871 down-regulates the catalytic activity. Its function is as follows. Catalyzes the conversion of (3S)-hydroxy-3-methylglutaryl-CoA (HMG-CoA) to mevalonic acid, the rate-limiting step in the synthesis of cholesterol and other isoprenoids, thus plays a critical role in cellular cholesterol homeostasis. The polypeptide is 3-hydroxy-3-methylglutaryl-coenzyme A reductase (HMGCR) (Mesocricetus auratus (Golden hamster)).